A 415-amino-acid chain; its full sequence is Serine hydroxymethyltransferase (415 aa).

(6S)-5,6,7,8-tetrahydrofolate-binding positions include Leu117 and 121–123 (GHL). Lys226 carries the N6-(pyridoxal phosphate)lysine modification. Residues Glu241 and 349-351 (SPF) each bind (6S)-5,6,7,8-tetrahydrofolate.

Belongs to the SHMT family. Homodimer. Pyridoxal 5'-phosphate is required as a cofactor.

The protein localises to the cytoplasm. It catalyses the reaction (6R)-5,10-methylene-5,6,7,8-tetrahydrofolate + glycine + H2O = (6S)-5,6,7,8-tetrahydrofolate + L-serine. Its pathway is one-carbon metabolism; tetrahydrofolate interconversion. It functions in the pathway amino-acid biosynthesis; glycine biosynthesis; glycine from L-serine: step 1/1. Catalyzes the reversible interconversion of serine and glycine with tetrahydrofolate (THF) serving as the one-carbon carrier. This reaction serves as the major source of one-carbon groups required for the biosynthesis of purines, thymidylate, methionine, and other important biomolecules. Also exhibits THF-independent aldolase activity toward beta-hydroxyamino acids, producing glycine and aldehydes, via a retro-aldol mechanism. The polypeptide is Serine hydroxymethyltransferase (Geotalea uraniireducens (strain Rf4) (Geobacter uraniireducens)).